The sequence spans 476 residues: Aspartyl/glutamyl-tRNA(Asn/Gln) amidotransferase subunit B (476 aa).

This sequence belongs to the GatB/GatE family. GatB subfamily. In terms of assembly, heterotrimer of A, B and C subunits.

It catalyses the reaction L-glutamyl-tRNA(Gln) + L-glutamine + ATP + H2O = L-glutaminyl-tRNA(Gln) + L-glutamate + ADP + phosphate + H(+). The enzyme catalyses L-aspartyl-tRNA(Asn) + L-glutamine + ATP + H2O = L-asparaginyl-tRNA(Asn) + L-glutamate + ADP + phosphate + 2 H(+). Functionally, allows the formation of correctly charged Asn-tRNA(Asn) or Gln-tRNA(Gln) through the transamidation of misacylated Asp-tRNA(Asn) or Glu-tRNA(Gln) in organisms which lack either or both of asparaginyl-tRNA or glutaminyl-tRNA synthetases. The reaction takes place in the presence of glutamine and ATP through an activated phospho-Asp-tRNA(Asn) or phospho-Glu-tRNA(Gln). In Bacillus velezensis (strain DSM 23117 / BGSC 10A6 / LMG 26770 / FZB42) (Bacillus amyloliquefaciens subsp. plantarum), this protein is Aspartyl/glutamyl-tRNA(Asn/Gln) amidotransferase subunit B.